We begin with the raw amino-acid sequence, 244 residues long: Ubiquinone/menaquinone biosynthesis C-methyltransferase UbiE (244 aa).

S-adenosyl-L-methionine contacts are provided by residues Thr-70, Asp-91, and Asp-117–Ala-118.

This sequence belongs to the class I-like SAM-binding methyltransferase superfamily. MenG/UbiE family.

The enzyme catalyses a 2-demethylmenaquinol + S-adenosyl-L-methionine = a menaquinol + S-adenosyl-L-homocysteine + H(+). It carries out the reaction a 2-methoxy-6-(all-trans-polyprenyl)benzene-1,4-diol + S-adenosyl-L-methionine = a 5-methoxy-2-methyl-3-(all-trans-polyprenyl)benzene-1,4-diol + S-adenosyl-L-homocysteine + H(+). It functions in the pathway quinol/quinone metabolism; menaquinone biosynthesis; menaquinol from 1,4-dihydroxy-2-naphthoate: step 2/2. It participates in cofactor biosynthesis; ubiquinone biosynthesis. In terms of biological role, methyltransferase required for the conversion of demethylmenaquinol (DMKH2) to menaquinol (MKH2) and the conversion of 2-polyprenyl-6-methoxy-1,4-benzoquinol (DDMQH2) to 2-polyprenyl-3-methyl-6-methoxy-1,4-benzoquinol (DMQH2). This is Ubiquinone/menaquinone biosynthesis C-methyltransferase UbiE from Laribacter hongkongensis (strain HLHK9).